A 147-amino-acid chain; its full sequence is Large ribosomal subunit protein bL9 (147 aa).

This sequence belongs to the bacterial ribosomal protein bL9 family.

Its function is as follows. Binds to the 23S rRNA. This chain is Large ribosomal subunit protein bL9, found in Halalkalibacterium halodurans (strain ATCC BAA-125 / DSM 18197 / FERM 7344 / JCM 9153 / C-125) (Bacillus halodurans).